The primary structure comprises 168 residues: Transmembrane protein 229b (168 aa).

Residues 1 to 14 are Cytoplasmic-facing; it reads MAPPEPLTALSRWY. A helical membrane pass occupies residues 15 to 35; the sequence is LYAIHGYFCEVMFTAAWDFVV. The Extracellular portion of the chain corresponds to 36-40; it reads NYNWK. A helical membrane pass occupies residues 41–61; it reads FPGVTSVWALFIYGTSILIVE. The Cytoplasmic portion of the chain corresponds to 62 to 72; sequence KMYLYLKDKCN. Residues 73-93 traverse the membrane as a helical segment; it reads ILIRCLIYTLWTYIWEFSTGL. At 94–109 the chain is on the extracellular side; the sequence is ILRQFNACPWDYSQFD. A helical membrane pass occupies residues 110-130; the sequence is FDFMGLITLEYAIPWFCASFI. Residues 131–168 lie on the Cytoplasmic side of the membrane; sequence MEQLVIRNTLRLRFDEHAEPGSPVMSTVSMANGHVKCN.

The protein belongs to the TMEM229 family.

It is found in the membrane. The protein is Transmembrane protein 229b (tmem229b) of Xenopus tropicalis (Western clawed frog).